The following is a 136-amino-acid chain: Small ribosomal subunit protein uS8c (136 aa).

The protein belongs to the universal ribosomal protein uS8 family. In terms of assembly, part of the 30S ribosomal subunit.

It is found in the plastid. Its subcellular location is the chloroplast. Functionally, one of the primary rRNA binding proteins, it binds directly to 16S rRNA central domain where it helps coordinate assembly of the platform of the 30S subunit. In Oryza sativa subsp. indica (Rice), this protein is Small ribosomal subunit protein uS8c (rps8).